The chain runs to 243 residues: Small ribosomal subunit protein uS2 (243 aa).

It belongs to the universal ribosomal protein uS2 family.

In Pseudoalteromonas atlantica (strain T6c / ATCC BAA-1087), this protein is Small ribosomal subunit protein uS2.